The sequence spans 195 residues: Ras-related protein rac-2 (195 aa).

10 to 17 contacts GTP; it reads GDGAVGKT. Residues 32 to 40 carry the Effector region motif; the sequence is YILTVFDTY. GTP-binding positions include 57–61 and 115–118; these read DTAGQ and TKAD. The tract at residues 176-195 is disordered; it reads GLTPPQTPQTRAKKSNCTVL. Cys192 is subject to Cysteine methyl ester. Cys192 carries S-geranylgeranyl cysteine lipidation. Residues 193–195 constitute a propeptide, removed in mature form; that stretch reads TVL.

It belongs to the small GTPase superfamily. Rho family.

The protein localises to the cell membrane. Functionally, during gonad morphogenesis, plays a role in distal tip cell (DTC)-mediated guidance of gonad elongation. This Caenorhabditis elegans protein is Ras-related protein rac-2 (rac-2).